The following is a 79-amino-acid chain: MPKRILQGTVVSDKNEKTVVVKVERRFTHPVMKKTVRMTKKYKAHDENNAHKVGDQVFIQESKPISKDKRWIVVSSDQA.

The protein belongs to the universal ribosomal protein uS17 family. Part of the 30S ribosomal subunit.

One of the primary rRNA binding proteins, it binds specifically to the 5'-end of 16S ribosomal RNA. This is Small ribosomal subunit protein uS17 from Mesorhizobium japonicum (strain LMG 29417 / CECT 9101 / MAFF 303099) (Mesorhizobium loti (strain MAFF 303099)).